The primary structure comprises 360 residues: Phospho-N-acetylmuramoyl-pentapeptide-transferase (360 aa).

10 helical membrane passes run 26 to 46, 70 to 90, 97 to 117, 132 to 152, 168 to 188, 199 to 219, 236 to 256, 263 to 283, 288 to 308, and 338 to 358; these read TILG…AVIQ, GTPT…TLLW, YVWV…VDDY, AKFF…FSTA, VVLP…VGSS, GLAI…AYAT, AGEV…FLWF, VFMG…LAVV, LVLL…MLQV, and VIVR…AMLK.

This sequence belongs to the glycosyltransferase 4 family. MraY subfamily. Mg(2+) is required as a cofactor.

Its subcellular location is the cell inner membrane. The enzyme catalyses UDP-N-acetyl-alpha-D-muramoyl-L-alanyl-gamma-D-glutamyl-meso-2,6-diaminopimeloyl-D-alanyl-D-alanine + di-trans,octa-cis-undecaprenyl phosphate = di-trans,octa-cis-undecaprenyl diphospho-N-acetyl-alpha-D-muramoyl-L-alanyl-D-glutamyl-meso-2,6-diaminopimeloyl-D-alanyl-D-alanine + UMP. It participates in cell wall biogenesis; peptidoglycan biosynthesis. Functionally, catalyzes the initial step of the lipid cycle reactions in the biosynthesis of the cell wall peptidoglycan: transfers peptidoglycan precursor phospho-MurNAc-pentapeptide from UDP-MurNAc-pentapeptide onto the lipid carrier undecaprenyl phosphate, yielding undecaprenyl-pyrophosphoryl-MurNAc-pentapeptide, known as lipid I. The chain is Phospho-N-acetylmuramoyl-pentapeptide-transferase from Alkalilimnicola ehrlichii (strain ATCC BAA-1101 / DSM 17681 / MLHE-1).